The following is a 615-amino-acid chain: DNA mismatch repair protein MutL (615 aa).

Positions 370–397 (EPVAPRYTPAPASGSRPAAPWPNTQPGY) are disordered. Residues 378-391 (PAPASGSRPAAPWP) show a composition bias toward low complexity.

Belongs to the DNA mismatch repair MutL/HexB family.

Functionally, this protein is involved in the repair of mismatches in DNA. It is required for dam-dependent methyl-directed DNA mismatch repair. May act as a 'molecular matchmaker', a protein that promotes the formation of a stable complex between two or more DNA-binding proteins in an ATP-dependent manner without itself being part of a final effector complex. This chain is DNA mismatch repair protein MutL, found in Shigella dysenteriae serotype 1 (strain Sd197).